An 848-amino-acid chain; its full sequence is ATP-dependent Clp protease ATP-binding subunit ClpC1 (848 aa).

In terms of domain architecture, Clp R spans 2-144; sequence FERFTDRARR…RQQVIQLLSG (143 aa). Repeat stretches follow at residues 5 to 70 and 80 to 144; these read FTDR…IGQG and FTPR…LLSG. The UVR domain maps to 425 to 460; sequence DEKIADARREKESAIDAQDFEKAAALRDKEKQLVAQ. Residues 553–560 and 617–626 each bind ATP; these read GPSGVGKT and KPFSVVLFDE. The segment at 811–848 is disordered; it reads GQGEDAKFTFSGGPKRAETAEPDLAGAGAAGAPTAGTE. Residues 835-848 show a composition bias toward low complexity; that stretch reads AGAGAAGAPTAGTE.

It belongs to the ClpA/ClpB family. ClpC subfamily.

ATP-dependent specificity component of the Clp protease. It directs the protease to specific substrates. Can perform chaperone functions in the absence of ClpP. Degrades anti-sigma-E factor RseA in the presence of ClpP2. This Mycolicibacterium smegmatis (strain ATCC 700084 / mc(2)155) (Mycobacterium smegmatis) protein is ATP-dependent Clp protease ATP-binding subunit ClpC1 (clpC1).